The following is a 317-amino-acid chain: MLLYRSAAWFAKGLREYTKSGYESASKDFVPDDLEVQVPGRAFMVTGGNSGIGKATAMEIAKRGGTVHLVCRDHSRAEGAKAEIIRESGNQNIFLHIVDLSLPKSVWKFVENFKQEHTLNVLINNAGCMVNKRELTEDGLEKNFATNTLGVYVLTTALIPVLEKEHDPRVITVSSGGMLVQKLNTDDPQSERTAFDGTMVYAQNKRQQVVLTERWARAHPAIHFSCMHPGWVDTPGVRLSMPGFHARLGARLRSEAQGADTVLWLALAPAATAQPSGCFFQDRKPAPTHLPLARTSSSPAEEEKLIEILEELARRFK.

Ser-50 and Ile-52 together coordinate NAD(+). Position 175 (Ser-175) interacts with substrate. Tyr-201, Lys-205, and Thr-234 together coordinate NAD(+). Tyr-201 acts as the Proton acceptor in catalysis.

Belongs to the short-chain dehydrogenases/reductases (SDR) family.

Functionally, putative oxidoreductase. This Bos taurus (Bovine) protein is Dehydrogenase/reductase SDR family member 12 (DHRS12).